Consider the following 211-residue polypeptide: ATP phosphoribosyltransferase (211 aa).

This sequence belongs to the ATP phosphoribosyltransferase family. Short subfamily. As to quaternary structure, heteromultimer composed of HisG and HisZ subunits.

The protein localises to the cytoplasm. The enzyme catalyses 1-(5-phospho-beta-D-ribosyl)-ATP + diphosphate = 5-phospho-alpha-D-ribose 1-diphosphate + ATP. It participates in amino-acid biosynthesis; L-histidine biosynthesis; L-histidine from 5-phospho-alpha-D-ribose 1-diphosphate: step 1/9. Its function is as follows. Catalyzes the condensation of ATP and 5-phosphoribose 1-diphosphate to form N'-(5'-phosphoribosyl)-ATP (PR-ATP). Has a crucial role in the pathway because the rate of histidine biosynthesis seems to be controlled primarily by regulation of HisG enzymatic activity. This Bacillus mycoides (strain KBAB4) (Bacillus weihenstephanensis) protein is ATP phosphoribosyltransferase.